The primary structure comprises 88 residues: Small ribosomal subunit protein bS16 (88 aa).

This sequence belongs to the bacterial ribosomal protein bS16 family.

The sequence is that of Small ribosomal subunit protein bS16 from Mycoplasma pneumoniae (strain ATCC 29342 / M129 / Subtype 1) (Mycoplasmoides pneumoniae).